Consider the following 235-residue polypeptide: MAGLAVNVDHVATLRQARGVDYPDPVAAAVLVELAGADGVVVHLREDRRHIQDRDVRIIRQIVQSKLILEMAATPEMIGIALEVRPHQATLVPEKREEVTTEGGLDVVMHKDSVADAIKTLQAGGIKVSLFVDPDLNQIKAAHKAGADVVELHTGDFCESRSPKAMAAIQEAARLARKVGMEVHAGHGIDFRSIQDFVGVKEIQEFSIGHSIVSRAVFIGLDAAVKEMMALARQV.

Asparagine 7 serves as a coordination point for 3-amino-2-oxopropyl phosphate. 9–10 is a binding site for 1-deoxy-D-xylulose 5-phosphate; it reads DH. Residue arginine 18 participates in 3-amino-2-oxopropyl phosphate binding. The active-site Proton acceptor is histidine 43. Arginine 45 and histidine 50 together coordinate 1-deoxy-D-xylulose 5-phosphate. Catalysis depends on glutamate 70, which acts as the Proton acceptor. Residue threonine 100 participates in 1-deoxy-D-xylulose 5-phosphate binding. Histidine 187 functions as the Proton donor in the catalytic mechanism. 3-amino-2-oxopropyl phosphate-binding positions include glycine 188 and 209–210; that span reads GH.

It belongs to the PNP synthase family. In terms of assembly, homooctamer; tetramer of dimers.

The protein resides in the cytoplasm. The catalysed reaction is 3-amino-2-oxopropyl phosphate + 1-deoxy-D-xylulose 5-phosphate = pyridoxine 5'-phosphate + phosphate + 2 H2O + H(+). The protein operates within cofactor biosynthesis; pyridoxine 5'-phosphate biosynthesis; pyridoxine 5'-phosphate from D-erythrose 4-phosphate: step 5/5. Its function is as follows. Catalyzes the complicated ring closure reaction between the two acyclic compounds 1-deoxy-D-xylulose-5-phosphate (DXP) and 3-amino-2-oxopropyl phosphate (1-amino-acetone-3-phosphate or AAP) to form pyridoxine 5'-phosphate (PNP) and inorganic phosphate. This is Pyridoxine 5'-phosphate synthase from Desulfatibacillum aliphaticivorans.